The sequence spans 191 residues: Adenine phosphoribosyltransferase 5 (191 aa).

Belongs to the purine/pyrimidine phosphoribosyltransferase family. Homodimer.

It localises to the cytoplasm. The enzyme catalyses AMP + diphosphate = 5-phospho-alpha-D-ribose 1-diphosphate + adenine. The protein operates within purine metabolism; AMP biosynthesis via salvage pathway; AMP from adenine: step 1/1. Its function is as follows. Catalyzes a salvage reaction resulting in the formation of AMP, that is energically less costly than de novo synthesis. May contribute to the recycling of adenine into adenylate nucleotides and the inactivation of cytokinins by phosphoribosylation. Possesses low activity toward adenine, but can efficiently convert cytokinins from free bases (active form) to the corresponding nucleotides (inactive form). This is Adenine phosphoribosyltransferase 5 (APT5) from Arabidopsis thaliana (Mouse-ear cress).